A 101-amino-acid polypeptide reads, in one-letter code: NAD(P)H-quinone oxidoreductase subunit 4L (101 aa).

The next 3 membrane-spanning stretches (helical) occupy residues 3 to 23 (LQYFLLIAAALFCIGVYGLVT), 30 to 50 (VLMSIELMLNAVNLNLMAFSN), and 64 to 84 (IFVITIAAAEAAVGLAIVLAI).

This sequence belongs to the complex I subunit 4L family. NDH-1 can be composed of about 15 different subunits; different subcomplexes with different compositions have been identified which probably have different functions.

The protein localises to the cellular thylakoid membrane. It catalyses the reaction a plastoquinone + NADH + (n+1) H(+)(in) = a plastoquinol + NAD(+) + n H(+)(out). The enzyme catalyses a plastoquinone + NADPH + (n+1) H(+)(in) = a plastoquinol + NADP(+) + n H(+)(out). In terms of biological role, NDH-1 shuttles electrons from an unknown electron donor, via FMN and iron-sulfur (Fe-S) centers, to quinones in the respiratory and/or the photosynthetic chain. The immediate electron acceptor for the enzyme in this species is believed to be plastoquinone. Couples the redox reaction to proton translocation, and thus conserves the redox energy in a proton gradient. Cyanobacterial NDH-1 also plays a role in inorganic carbon-concentration. The chain is NAD(P)H-quinone oxidoreductase subunit 4L from Leptolyngbya boryana (Plectonema boryanum).